Reading from the N-terminus, the 178-residue chain is uncharacterized protein (178 aa).

2 disordered regions span residues 89-115 (NEEQ…RLSI) and 136-178 (DMPT…EIKA). Residues 98–109 (ASHGSTSSATST) are compositionally biased toward low complexity. The segment covering 167-178 (DSDEEEEEEIKA) has biased composition (acidic residues).

Its subcellular location is the cytoplasm. The protein localises to the nucleus. This is an uncharacterized protein from Schizosaccharomyces pombe (strain 972 / ATCC 24843) (Fission yeast).